The chain runs to 61 residues: Sperm protamine P1 (61 aa).

Residues 1 to 61 (MARYRHSRSR…RYSRRRRRRY (61 aa)) form a disordered region.

It belongs to the protamine P1 family. Testis.

It localises to the nucleus. The protein resides in the chromosome. Its function is as follows. Protamines substitute for histones in the chromatin of sperm during the haploid phase of spermatogenesis. They compact sperm DNA into a highly condensed, stable and inactive complex. This chain is Sperm protamine P1 (PRM1), found in Onychogalea fraenata (Bridled nail-tailed wallaby).